A 156-amino-acid chain; its full sequence is Nucleosome assembly protein 1-like 5 (156 aa).

The segment covering 1–16 (MADPEKQGPAESRAED) has biased composition (basic and acidic residues). The segment at 1 to 58 (MADPEKQGPAESRAEDEVMEGAQGGEDAATGDSAAAPAAEEPQAPAENAPKPKKDFME) is disordered. Residues 34-49 (AAAPAAEEPQAPAENA) show a composition bias toward low complexity. Residues 68–94 (VLALKKLQKRCDKIEAKFDKEFQALEK) adopt a coiled-coil conformation. The disordered stretch occupies residues 120-156 (TLEGEDDEDDEEEDDEEEEEEEEAAAGATGGPNFAKK). The span at 122–143 (EGEDDEDDEEEDDEEEEEEEEA) shows a compositional bias: acidic residues.

It belongs to the nucleosome assembly protein (NAP) family.

The protein localises to the nucleus. The polypeptide is Nucleosome assembly protein 1-like 5 (Nap1l5) (Mus musculus (Mouse)).